A 440-amino-acid polypeptide reads, in one-letter code: uncharacterized protein (440 aa).

This is an uncharacterized protein from Rickettsia prowazekii (strain Madrid E).